The primary structure comprises 240 residues: Predicted GPI-anchored protein 58 (240 aa).

The N-terminal stretch at 1-18 is a signal peptide; that stretch reads MQFSTLVSLAAVIVSTNA. The disordered stretch occupies residues 41–216; sequence HTNCPASSPA…NSTGPSSVPT (176 aa). Residues 51 to 86 show a composition bias toward pro residues; that stretch reads TPAPAPSASAPAPPAPEQPEPSAPAPAPSAPAPEQP. Positions 87 to 103 are enriched in low complexity; it reads EQPATPATPAAPATPAT. 2 stretches are compositionally biased toward pro residues: residues 104–137 and 153–192; these read PAAPEPSAPAPEQPASPAAPAPAPSAPAPAPEQP and APAPSAPAPPAPEQPESAPAPAPSAPAPEQPESSPAPAPS. Low complexity predominate over residues 193 to 216; sequence APASVPEQPASSVSNSTGPSSVPT. Asn207 is a glycosylation site (N-linked (GlcNAc...) asparagine). A lipid anchor (GPI-anchor amidated glycine) is attached at Gly219. Residues 220-240 constitute a propeptide, removed in mature form; it reads AAAKQYITGSVAVIAAALLAL.

It is found in the cell membrane. The protein is Predicted GPI-anchored protein 58 (PGA58) of Candida albicans (strain SC5314 / ATCC MYA-2876) (Yeast).